Consider the following 842-residue polypeptide: Protein P (842 aa).

Positions 1–177 (MPLSYQHFRR…FCGSPYTWEQ (177 aa)) are terminal protein domain (TP). The segment at 178-345 (DLQHGAFLDG…YCLSHLVNLL (168 aa)) is spacer. The tract at residues 184–238 (FLDGPSRVGKEPFHQQSSRIPSRSPVGPSIQSKYQQSRLGLQSQKGPLARGQQGR) is disordered. Residues 212-228 (SIQSKYQQSRLGLQSQK) show a composition bias toward polar residues. Positions 346-689 (QDWGPCTEHG…YMNLYPVARQ (344 aa)) are polymerase/reverse transcriptase domain (RT). In terms of domain architecture, Reverse transcriptase spans 356-599 (EYHIRIPRTP…YSLNFMGYVI (244 aa)). Mg(2+)-binding residues include aspartate 428, aspartate 550, and aspartate 551.

Belongs to the hepadnaviridae P protein family.

The catalysed reaction is DNA(n) + a 2'-deoxyribonucleoside 5'-triphosphate = DNA(n+1) + diphosphate. It catalyses the reaction Endonucleolytic cleavage to 5'-phosphomonoester.. Its activity is regulated as follows. Activated by host HSP70 and HSP40 in vitro to be able to bind the epsilon loop of the pgRNA. Because deletion of the RNase H region renders the protein partly chaperone-independent, the chaperones may be needed indirectly to relieve occlusion of the RNA-binding site by this domain. Inhibited by several reverse-transcriptase inhibitors: Lamivudine, Adefovir and Entecavir. Multifunctional enzyme that converts the viral RNA genome into dsDNA in viral cytoplasmic capsids. This enzyme displays a DNA polymerase activity that can copy either DNA or RNA templates, and a ribonuclease H (RNase H) activity that cleaves the RNA strand of RNA-DNA heteroduplexes in a partially processive 3'- to 5'-endonucleasic mode. Neo-synthesized pregenomic RNA (pgRNA) are encapsidated together with the P protein, and reverse-transcribed inside the nucleocapsid. Initiation of reverse-transcription occurs first by binding the epsilon loop on the pgRNA genome, and is initiated by protein priming, thereby the 5'-end of (-)DNA is covalently linked to P protein. Partial (+)DNA is synthesized from the (-)DNA template and generates the relaxed circular DNA (RC-DNA) genome. After budding and infection, the RC-DNA migrates in the nucleus, and is converted into a plasmid-like covalently closed circular DNA (cccDNA). The activity of P protein does not seem to be necessary for cccDNA generation, and is presumably released from (+)DNA by host nuclear DNA repair machinery. This Hepatitis B virus genotype G (isolate United States/USG17/2002) (HBV-G) protein is Protein P.